A 302-amino-acid chain; its full sequence is Alpha-ketoglutarate-dependent dioxygenase alkB homolog 4 (302 aa).

Ala-2 carries the post-translational modification N-acetylalanine. Thr-8 is subject to Phosphothreonine. The Fe2OG dioxygenase domain maps to 150–274 (PVEQCNLDYC…RVCVTFRELS (125 aa)). Fe cation is bound by residues His-169, Asp-171, and His-254. Arg-265 provides a ligand contact to 2-oxoglutarate.

It belongs to the alkB family. As to quaternary structure, interacts with ZFHX3, MLLT3, MLLT1, HSF4, EP300, TES, EIF3C, MTMR6 and PSMA6. The cofactor is Fe(2+). As to expression, widely expressed, with highest expression in pancreas, ovary and spleen.

It is found in the cytoplasm. Its subcellular location is the nucleus. It localises to the nucleolus. The protein localises to the midbody. The enzyme catalyses an N(6)-methyl-2'-deoxyadenosine in DNA + 2-oxoglutarate + O2 = a 2'-deoxyadenosine in DNA + formaldehyde + succinate + CO2. It carries out the reaction N(6)-methyl-L-lysyl-[protein] + 2-oxoglutarate + O2 = L-lysyl-[protein] + formaldehyde + succinate + CO2. Its function is as follows. Dioxygenase that mediates demethylation of actin monomethylated at 'Lys-84' (K84me1), thereby acting as a regulator of actomyosin-processes. Demethylation of actin K84me1 is required for maintaining actomyosin dynamics supporting normal cleavage furrow ingression during cytokinesis and cell migration. In addition to proteins, also demethylates DNA: specifically demethylates DNA methylated on the 6th position of adenine (N(6)-methyladenosine) DNA, thereby regulating Polycomb silencing. This chain is Alpha-ketoglutarate-dependent dioxygenase alkB homolog 4, found in Homo sapiens (Human).